The sequence spans 481 residues: N-succinylglutamate 5-semialdehyde dehydrogenase (481 aa).

206-211 (GSARTG) contacts NAD(+). Residues Glu-229 and Cys-263 contribute to the active site.

The protein belongs to the aldehyde dehydrogenase family. AstD subfamily.

It carries out the reaction N-succinyl-L-glutamate 5-semialdehyde + NAD(+) + H2O = N-succinyl-L-glutamate + NADH + 2 H(+). Its pathway is amino-acid degradation; L-arginine degradation via AST pathway; L-glutamate and succinate from L-arginine: step 4/5. In terms of biological role, catalyzes the NAD-dependent reduction of succinylglutamate semialdehyde into succinylglutamate. This chain is N-succinylglutamate 5-semialdehyde dehydrogenase, found in Sphingopyxis alaskensis (strain DSM 13593 / LMG 18877 / RB2256) (Sphingomonas alaskensis).